The sequence spans 359 residues: Guanine nucleotide-binding protein subunit alpha-11 (359 aa).

2 S-palmitoyl cysteine lipidation sites follow: Cys9 and Cys10. The region spanning 38–359 (RELKLLLLGT…QLNLKEYNLV (322 aa)) is the G-alpha domain. The interval 41–54 (KLLLLGTGESGKST) is G1 motif. GTP-binding positions include 46–53 (GTGESGKS) and 180–183 (LRVR). Mg(2+) is bound at residue Ser53. The segment at 178–186 (DVLRVRVPT) is G2 motif. Thr186 provides a ligand contact to Mg(2+). The tract at residues 201–210 (FRMVDVGGQR) is G3 motif. The interval 270-277 (ILFLNKKD) is G4 motif. Residues 274–277 (NKKD) and Ala331 contribute to the GTP site. Residues 329-334 (TCATDT) are G5 motif.

Belongs to the G-alpha family. G(q) subfamily. In terms of assembly, g proteins are composed of 3 units; alpha, beta and gamma. The alpha chain contains the guanine nucleotide binding site. Interacts with RGS22. Interacts with NTSR1.

It is found in the cell membrane. Its subcellular location is the cytoplasm. The catalysed reaction is GTP + H2O = GDP + phosphate + H(+). Functionally, guanine nucleotide-binding proteins (G proteins) function as transducers downstream of G protein-coupled receptors (GPCRs) in numerous signaling cascades. The alpha chain contains the guanine nucleotide binding site and alternates between an active, GTP-bound state and an inactive, GDP-bound state. Signaling by an activated GPCR promotes GDP release and GTP binding. The alpha subunit has a low GTPase activity that converts bound GTP to GDP, thereby terminating the signal. Both GDP release and GTP hydrolysis are modulated by numerous regulatory proteins. Signaling is mediated via phospholipase C-beta-dependent inositol lipid hydrolysis for signal propagation: activates phospholipase C-beta: following GPCR activation, GNA11 activates PLC-beta (PLCB1, PLCB2, PLCB3 or PLCB4), leading to production of diacylglycerol (DAG) and inositol 1,4,5-trisphosphate (IP3). Transduces FFAR4 signaling in response to long-chain fatty acids (LCFAs). Together with GNAQ, required for heart development. In the respiratory epithelium, transmits OXGR1-dependent signals that lead to downstream intracellular Ca(2+) release and mucocilliary clearance of airborne pathogens. This is Guanine nucleotide-binding protein subunit alpha-11 (Gna11) from Rattus norvegicus (Rat).